Consider the following 106-residue polypeptide: Large ribosomal subunit protein eL42 (106 aa).

This sequence belongs to the eukaryotic ribosomal protein eL42 family.

The protein is Large ribosomal subunit protein eL42 (RPL44) of Kluyveromyces lactis (strain ATCC 8585 / CBS 2359 / DSM 70799 / NBRC 1267 / NRRL Y-1140 / WM37) (Yeast).